A 49-amino-acid polypeptide reads, in one-letter code: Large ribosomal subunit protein eL40 (49 aa).

It belongs to the eukaryotic ribosomal protein eL40 family.

This chain is Large ribosomal subunit protein eL40, found in Halorubrum lacusprofundi (strain ATCC 49239 / DSM 5036 / JCM 8891 / ACAM 34).